A 275-amino-acid chain; its full sequence is CIQLGTEQTCKSVDSNDCLVTTSVKVCLIGTVSKFQPSDTLLFLGPLEQGGLIFKQWCTTTCQFGDPGDIMSTPVGMKCPELSGSFRKKCAFATTPVCQFDGNTISGYKRMIATKDSFQSFNVTEPHISASSLEWIDPDSSLRDHINVIVGRDLSFQDLSETPCQVDLTTTSIDGAWGSGVGFNLICSVSLTECSTFLTSIKACDSAMCYGSTTANLLRGQNTVHIVGKGGHSGSKFMCCHDTKCSSTGLIAAAPHLDRVTGYNQADSDKIFDDG.

Intrachain disulfides connect Cys1–Cys10, Cys18–Cys27, and Cys58–Cys62. The N-linked (GlcNAc...) asparagine; by host glycan is linked to Asn122. 4 cysteine pairs are disulfide-bonded: Cys164-Cys194, Cys187-Cys239, Cys204-Cys209, and Cys240-Cys245.

It belongs to the hantavirus envelope glycoprotein family. As to quaternary structure, homodimer. Homotetramer; forms heterotetrameric Gn-Gc spikes in the pre-fusion conformation. Homotrimer; forms homotrimer in the post-fusion conformation at acidic pH. Interacts (via C-terminus) with the nucleoprotein. Post-translationally, envelope polyprotein precursor is quickly cleaved in vivo just after synthesis, presumably by host signal peptidase.

It localises to the virion membrane. It is found in the host cell surface. The protein localises to the host Golgi apparatus membrane. Its subcellular location is the host endoplasmic reticulum membrane. Functionally, forms homotetramers with glycoprotein N at the surface of the virion. Attaches the virion to host cell receptors including integrin ITGAV/ITGB3. This attachment induces virion internalization predominantly through clathrin-dependent endocytosis. Class II fusion protein that promotes fusion of viral membrane with host endosomal membrane after endocytosis of the virion. The chain is Envelope glycoprotein (GP) from Homo sapiens (Human).